A 487-amino-acid chain; its full sequence is Serine/threonine-protein phosphatase 2A activator 1 (487 aa).

2 disordered regions span residues 1 to 28 (MPMI…SSST) and 426 to 487 (GGIQ…PKPE).

This sequence belongs to the PTPA-type PPIase family.

The protein localises to the cytoplasm. The protein resides in the nucleus. It catalyses the reaction [protein]-peptidylproline (omega=180) = [protein]-peptidylproline (omega=0). PPIases accelerate the folding of proteins. It catalyzes the cis-trans isomerization of proline imidic peptide bonds in oligopeptides. Acts as a regulatory subunit for PP2A-like phosphatases modulating their activity or substrate specificity, probably by inducing a conformational change in the catalytic subunit, a direct target of the PPIase. Can reactivate inactive phosphatase PP2A-phosphatase methylesterase complexes (PP2Ai) in presence of ATP and Mg(2+) by dissociating the inactive form from the complex. This is Serine/threonine-protein phosphatase 2A activator 1 (RRD1) from Mycosarcoma maydis (Corn smut fungus).